The chain runs to 494 residues: DUF21 domain-containing protein At4g14240 (494 aa).

Residues 1–43 (MHLINAVAAARILSGIGQSNGNNGGEAIPFGSFEWITYAGISC) lie on the Extracellular side of the membrane. The CNNM transmembrane domain maps to 31-213 (GSFEWITYAG…GKGGELTHDE (183 aa)). The chain crosses the membrane as a helical span at residues 44–64 (FLVLFAGIMSGLTLGLMSLGL). The Cytoplasmic segment spans residues 65–93 (VELEILQRSGTPNEKKQAAAIFPVVQKQH). Residues 94 to 114 (QLLVTLLLCNAMAMEGLPIYL) traverse the membrane as a helical segment. The Extracellular segment spans residues 115–121 (DKLFNEY). A helical membrane pass occupies residues 122 to 142 (VAIILSVTFVLAFGEVIPQAI). At 143 to 159 (CTRYGLAVGANFVWLVR) the chain is on the cytoplasmic side. Residues 160–180 (ILMTLCYPIAFPIGKILDLVL) traverse the membrane as a helical segment. The Extracellular portion of the chain corresponds to 181–494 (GHNDALFRRA…TITEPIRRNN (314 aa)). CBS domains follow at residues 232–292 (MTPI…TETL), 297–352 (CIRR…SNDS), and 364–425 (GNHD…IVDE). 2 N-linked (GlcNAc...) asparagine glycosylation sites follow: Asn350 and Asn385. The tract at residues 459–494 (QKGTGGQNKQGQTNKVPGQEQDKMLGTITEPIRRNN) is disordered.

Its subcellular location is the membrane. This chain is DUF21 domain-containing protein At4g14240 (CBSDUF1), found in Arabidopsis thaliana (Mouse-ear cress).